We begin with the raw amino-acid sequence, 625 residues long: Mitochondrial Rho GTPase 1 (625 aa).

Residues 1–601 (MSDDETLADV…LRRVFYLNDS (601 aa)) are Cytoplasmic-facing. Residues 3-170 (DDETLADVRI…EIFYYAQKAV (168 aa)) form the Miro 1 domain. Residues 16 to 23 (GDEGCGKT), 62 to 66 (DLSIK), and 123 to 126 (NKSD) each bind GTP. EF-hand domains are found at residues 188 to 223 (RARK…CFGI) and 308 to 343 (EGVQ…CPVP). 10 residues coordinate Ca(2+): aspartate 201, aspartate 203, aspartate 205, tyrosine 207, glutamate 212, aspartate 321, aspartate 323, aspartate 325, cysteine 327, and glutamate 332. The Miro 2 domain maps to 420–625 (HGTDRKVFQC…LAGFLVLKNL (206 aa)). GTP contacts are provided by residues 433-440 (GAKDAGKT), 470-474 (RVKEE), and 537-540 (TKVE). A helical; Anchor for type IV membrane protein transmembrane segment spans residues 602 to 622 (NLLSKITFGAAIVALAGFLVL). Over 623-625 (KNL) the chain is Mitochondrial intermembrane.

This sequence belongs to the mitochondrial Rho GTPase family.

The protein localises to the mitochondrion outer membrane. Mitochondrial GTPase involved in mitochondrial trafficking. Probably involved in control of anterograde transport of mitochondria and their subcellular distribution. Plays a role in maintaining mitochondrial morphology. This Caenorhabditis elegans protein is Mitochondrial Rho GTPase 1.